Consider the following 367-residue polypeptide: Chorismate synthase (367 aa).

Residue Arg48 coordinates NADP(+). FMN is bound by residues 125-127 (RSS), Gly283, 298-302 (KPTPS), and Arg324.

This sequence belongs to the chorismate synthase family. In terms of assembly, homotetramer. FMNH2 is required as a cofactor.

The enzyme catalyses 5-O-(1-carboxyvinyl)-3-phosphoshikimate = chorismate + phosphate. It participates in metabolic intermediate biosynthesis; chorismate biosynthesis; chorismate from D-erythrose 4-phosphate and phosphoenolpyruvate: step 7/7. Catalyzes the anti-1,4-elimination of the C-3 phosphate and the C-6 proR hydrogen from 5-enolpyruvylshikimate-3-phosphate (EPSP) to yield chorismate, which is the branch point compound that serves as the starting substrate for the three terminal pathways of aromatic amino acid biosynthesis. This reaction introduces a second double bond into the aromatic ring system. This Agathobacter rectalis (strain ATCC 33656 / DSM 3377 / JCM 17463 / KCTC 5835 / VPI 0990) (Eubacterium rectale) protein is Chorismate synthase.